A 440-amino-acid chain; its full sequence is Xaa-Pro dipeptidase (440 aa).

Asp244, Asp255, His335, Glu380, and Glu419 together coordinate Mn(2+).

This sequence belongs to the peptidase M24B family. Bacterial-type prolidase subfamily. Mn(2+) is required as a cofactor.

The catalysed reaction is Xaa-L-Pro dipeptide + H2O = an L-alpha-amino acid + L-proline. Functionally, splits dipeptides with a prolyl residue in the C-terminal position. The protein is Xaa-Pro dipeptidase of Shewanella loihica (strain ATCC BAA-1088 / PV-4).